The primary structure comprises 202 residues: Prostamide/prostaglandin F synthase (202 aa).

A Phosphotyrosine modification is found at Tyr108.

The protein belongs to the peroxiredoxin-like PRXL2 family. Prostamide/prostaglandin F synthase subfamily.

The protein resides in the cytoplasm. It is found in the cytosol. The enzyme catalyses prostaglandin H2 + [thioredoxin]-dithiol = prostaglandin F2alpha + [thioredoxin]-disulfide. The catalysed reaction is prostamide F2alpha + [thioredoxin]-disulfide = prostamide H2 + [thioredoxin]-dithiol. Catalyzes the reduction of prostaglandin-ethanolamide H(2) (prostamide H(2)) to prostamide F(2alpha) with NADPH as proton donor. Also able to reduce prostaglandin H(2) to prostaglandin F(2alpha). The protein is Prostamide/prostaglandin F synthase (PRXL2B) of Sus scrofa (Pig).